A 98-amino-acid chain; its full sequence is Co-chaperonin GroES 5 (98 aa).

This sequence belongs to the GroES chaperonin family. In terms of assembly, heptamer of 7 subunits arranged in a ring. Interacts with the chaperonin GroEL.

It is found in the cytoplasm. Its function is as follows. Together with the chaperonin GroEL, plays an essential role in assisting protein folding. The GroEL-GroES system forms a nano-cage that allows encapsulation of the non-native substrate proteins and provides a physical environment optimized to promote and accelerate protein folding. GroES binds to the apical surface of the GroEL ring, thereby capping the opening of the GroEL channel. This chain is Co-chaperonin GroES 5, found in Mesorhizobium japonicum (strain LMG 29417 / CECT 9101 / MAFF 303099) (Mesorhizobium loti (strain MAFF 303099)).